The sequence spans 288 residues: 4-diphosphocytidyl-2-C-methyl-D-erythritol kinase (288 aa).

The active site involves K22. Residue 104 to 114 coordinates ATP; it reads PSQAGLGGGSS. D146 is an active-site residue.

The protein belongs to the GHMP kinase family. IspE subfamily.

The catalysed reaction is 4-CDP-2-C-methyl-D-erythritol + ATP = 4-CDP-2-C-methyl-D-erythritol 2-phosphate + ADP + H(+). It functions in the pathway isoprenoid biosynthesis; isopentenyl diphosphate biosynthesis via DXP pathway; isopentenyl diphosphate from 1-deoxy-D-xylulose 5-phosphate: step 3/6. Functionally, catalyzes the phosphorylation of the position 2 hydroxy group of 4-diphosphocytidyl-2C-methyl-D-erythritol. The chain is 4-diphosphocytidyl-2-C-methyl-D-erythritol kinase from Protochlamydia amoebophila (strain UWE25).